A 211-amino-acid polypeptide reads, in one-letter code: Protein TMA23 (211 aa).

Positions 115–211 are disordered; that stretch reads ASFVVSSASS…SARRDRKEHI (97 aa). Over residues 116–125 the composition is skewed to low complexity; the sequence is SFVVSSASSS. Basic residues-rich tracts occupy residues 140 to 149, 158 to 176, and 185 to 197; these read VKRKKLKKDK, KKKK…KKSK, and SKHK…KKHK. The span at 198 to 211 shows a compositional bias: basic and acidic residues; it reads KEESSARRDRKEHI.

Forms homooligomers. Associates with ribosomal complexes.

It is found in the nucleus. Its subcellular location is the nucleolus. Functionally, trans-acting factors of the ribosome biogenesis process. The sequence is that of Protein TMA23 (TMA23) from Saccharomyces cerevisiae (strain ATCC 204508 / S288c) (Baker's yeast).